Consider the following 337-residue polypeptide: Transaldolase (337 aa).

Residue Lys115 is modified to N6-acetyllysine. Catalysis depends on Lys142, which acts as the Schiff-base intermediate with substrate. Lys219 carries the post-translational modification N6-acetyllysine. A phosphoserine mark is found at Ser237 and Ser256. N6-acetyllysine occurs at positions 269, 286, and 321.

The protein belongs to the transaldolase family. Type 1 subfamily. In terms of assembly, homodimer.

It is found in the cytoplasm. The enzyme catalyses D-sedoheptulose 7-phosphate + D-glyceraldehyde 3-phosphate = D-erythrose 4-phosphate + beta-D-fructose 6-phosphate. Its pathway is carbohydrate degradation; pentose phosphate pathway; D-glyceraldehyde 3-phosphate and beta-D-fructose 6-phosphate from D-ribose 5-phosphate and D-xylulose 5-phosphate (non-oxidative stage): step 2/3. Functionally, transaldolase is important for the balance of metabolites in the pentose-phosphate pathway. The chain is Transaldolase (TALDO1) from Bos taurus (Bovine).